The chain runs to 387 residues: F-box protein DOR (387 aa).

An F-box domain is found at 19–64 (DENFEPIPIDLVIEIFSRSPVKSIARCRCVSKLWASILRLPYFTEL).

As to quaternary structure, part of a SCF (ASK-cullin-F-box) protein ligase complex. Interacts with ASK14 and CUL1. As to expression, strongly expressed in guard cells. Mostly represented in seedlings, leaves and flowers, and, to a lower extent, in roots and siliques.

It participates in protein modification; protein ubiquitination. Component of SCF(ASK-cullin-F-box) E3 ubiquitin ligase complexes, which may mediate the ubiquitination and subsequent proteasomal degradation of target proteins. Negative regulator of guard cell abscisic acid (ABA) signaling, especially during drought stress. This Arabidopsis thaliana (Mouse-ear cress) protein is F-box protein DOR (DOR).